Consider the following 519-residue polypeptide: Cytochrome P450 52A10 (519 aa).

Position 466 (cysteine 466) interacts with heme.

The protein belongs to the cytochrome P450 family. Requires heme as cofactor.

The protein resides in the membrane. Functionally, together with an NADPH cytochrome P450 the enzyme system catalyzes the terminal hydroxylation as the first step in the assimilation of alkanes and fatty acids. The polypeptide is Cytochrome P450 52A10 (CYP52A10) (Candida maltosa (Yeast)).